The chain runs to 319 residues: 4-hydroxy-3-methylbut-2-enyl diphosphate reductase (319 aa).

A [4Fe-4S] cluster-binding site is contributed by Cys18. The (2E)-4-hydroxy-3-methylbut-2-enyl diphosphate site is built by His47 and His81. 2 residues coordinate dimethylallyl diphosphate: His47 and His81. Residues His47 and His81 each coordinate isopentenyl diphosphate. Cys103 lines the [4Fe-4S] cluster pocket. His131 provides a ligand contact to (2E)-4-hydroxy-3-methylbut-2-enyl diphosphate. His131 lines the dimethylallyl diphosphate pocket. An isopentenyl diphosphate-binding site is contributed by His131. Glu133 functions as the Proton donor in the catalytic mechanism. Residue Thr172 coordinates (2E)-4-hydroxy-3-methylbut-2-enyl diphosphate. Cys202 lines the [4Fe-4S] cluster pocket. (2E)-4-hydroxy-3-methylbut-2-enyl diphosphate-binding residues include Ser230, Ser231, Asn232, and Ser275. Dimethylallyl diphosphate is bound by residues Ser230, Ser231, Asn232, and Ser275. Isopentenyl diphosphate contacts are provided by Ser230, Ser231, Asn232, and Ser275.

The protein belongs to the IspH family. The cofactor is [4Fe-4S] cluster.

It catalyses the reaction isopentenyl diphosphate + 2 oxidized [2Fe-2S]-[ferredoxin] + H2O = (2E)-4-hydroxy-3-methylbut-2-enyl diphosphate + 2 reduced [2Fe-2S]-[ferredoxin] + 2 H(+). The catalysed reaction is dimethylallyl diphosphate + 2 oxidized [2Fe-2S]-[ferredoxin] + H2O = (2E)-4-hydroxy-3-methylbut-2-enyl diphosphate + 2 reduced [2Fe-2S]-[ferredoxin] + 2 H(+). It participates in isoprenoid biosynthesis; dimethylallyl diphosphate biosynthesis; dimethylallyl diphosphate from (2E)-4-hydroxy-3-methylbutenyl diphosphate: step 1/1. The protein operates within isoprenoid biosynthesis; isopentenyl diphosphate biosynthesis via DXP pathway; isopentenyl diphosphate from 1-deoxy-D-xylulose 5-phosphate: step 6/6. In terms of biological role, catalyzes the conversion of 1-hydroxy-2-methyl-2-(E)-butenyl 4-diphosphate (HMBPP) into a mixture of isopentenyl diphosphate (IPP) and dimethylallyl diphosphate (DMAPP). Acts in the terminal step of the DOXP/MEP pathway for isoprenoid precursor biosynthesis. This Beijerinckia indica subsp. indica (strain ATCC 9039 / DSM 1715 / NCIMB 8712) protein is 4-hydroxy-3-methylbut-2-enyl diphosphate reductase.